The chain runs to 203 residues: Glycerol-3-phosphate acyltransferase (203 aa).

4 helical membrane-spanning segments follow: residues leucine 4–isoleucine 24, isoleucine 68–isoleucine 88, glycine 104–serine 124, and phenylalanine 125–isoleucine 145.

The protein belongs to the PlsY family. Probably interacts with PlsX.

The protein localises to the cell inner membrane. It carries out the reaction an acyl phosphate + sn-glycerol 3-phosphate = a 1-acyl-sn-glycero-3-phosphate + phosphate. It participates in lipid metabolism; phospholipid metabolism. Catalyzes the transfer of an acyl group from acyl-phosphate (acyl-PO(4)) to glycerol-3-phosphate (G3P) to form lysophosphatidic acid (LPA). This enzyme utilizes acyl-phosphate as fatty acyl donor, but not acyl-CoA or acyl-ACP. In Tolumonas auensis (strain DSM 9187 / NBRC 110442 / TA 4), this protein is Glycerol-3-phosphate acyltransferase.